The primary structure comprises 345 residues: Alpha-N-acetylneuraminide alpha-2,8-sialyltransferase (345 aa).

Residues 1 to 15 (MKLQGSRMWLCPRTR) are Cytoplasmic-facing. A helical; Signal-anchor for type II membrane protein membrane pass occupies residues 16-36 (LPVGASALGFLILCWLYVFPG). Residues 37–345 (YRLPGHKEMV…KKDVSSQKPH (309 aa)) are Lumenal-facing. Residues asparagine 59 and asparagine 107 are each glycosylated (N-linked (GlcNAc...) asparagine). Cystine bridges form between cysteine 126–cysteine 275 and cysteine 140–cysteine 335. CMP-N-acetyl-beta-neuraminate is bound by residues asparagine 131 and asparagine 154. Substrate is bound by residues asparagine 154 and 176–178 (NPS). N-linked (GlcNAc...) asparagine glycosylation occurs at asparagine 233. CMP-N-acetyl-beta-neuraminate contacts are provided by serine 262, threonine 263, glycine 264, tryptophan 284, and histidine 298. Position 262-264 (262-264 (STG)) interacts with substrate. The active-site Proton donor/acceptor is the histidine 310.

The protein belongs to the glycosyltransferase 29 family.

The protein localises to the golgi apparatus membrane. It carries out the reaction an N-acetyl-alpha-neuraminyl-(2-&gt;3)-beta-D-galactosyl derivative + CMP-N-acetyl-beta-neuraminate = an N-acetyl-alpha-neuraminyl-(2-&gt;8)-N-acetyl-alpha-neuraminyl-(2-&gt;3)-beta-D-galactosyl derivative + CMP + H(+). The catalysed reaction is a ganglioside GM3 (d18:1(4E)) + CMP-N-acetyl-beta-neuraminate = a ganglioside GD3 (d18:1(4E)) + CMP + H(+). It catalyses the reaction a ganglioside GD3 (d18:1(4E)) + CMP-N-acetyl-beta-neuraminate = a ganglioside GT3 (d18:1(4E)) + CMP + H(+). The enzyme catalyses a ganglioside GD1a (d18:1(4E)) + CMP-N-acetyl-beta-neuraminate = a ganglioside GT1a (d18:1(4E)) + CMP + H(+). It carries out the reaction a ganglioside GT1b (d18:1(4E)) + CMP-N-acetyl-beta-neuraminate = a ganglioside GQ1b (d18:1(4E)) + CMP + H(+). The catalysed reaction is a ganglioside GM1b (d18:1(4E)) + CMP-N-acetyl-beta-neuraminate = a ganglioside GD1c (d18:1(4E)) + CMP + H(+). It catalyses the reaction a ganglioside GD3 + CMP-N-acetyl-beta-neuraminate = a ganglioside GT3 + CMP + H(+). The enzyme catalyses [alpha-N-acetylneuraminyl-(2-&gt;8)](n)-alpha-N-acetylneuraminyl-(2-&gt;8)-alpha-N-acetylneuraminyl-(2-&gt;3)-beta-D-galactosyl-(1-&gt;4)-beta-D-glucosyl-(1&lt;-&gt;1)-ceramide + CMP-N-acetyl-beta-neuraminate = [alpha-N-acetylneuraminyl-(2-&gt;8)](n+1)-alpha-N-acetylneuraminyl-(2-&gt;8)-alpha-N-acetylneuraminyl-(2-&gt;3)-beta-D-galactosyl-(1-&gt;4)-beta-D-glucosyl-(1&lt;-&gt;1)-ceramide + CMP + H(+). Its pathway is protein modification; protein glycosylation. The protein operates within lipid metabolism; sphingolipid metabolism. In terms of biological role, catalyzes the addition of sialic acid in alpha 2,8-linkage to the sialic acid moiety of the ganglioside GM3 to form ganglioside GD3; gangliosides are a subfamily of complex glycosphingolipds that contain one or more residues of sialic acid. Glycosphingolipids are required for convergence extension movements during early development. Can catalyze the addition of a second alpha-2,8- sialic acid to GD3 to form GT3. Can use GM1b, GD1a and GT1b as acceptor substrates to synthesize GD1c, GT1a and GQ1b respectively. This Xenopus tropicalis (Western clawed frog) protein is Alpha-N-acetylneuraminide alpha-2,8-sialyltransferase.